The chain runs to 414 residues: Arrestin domain-containing protein 3 (414 aa).

Short sequence motifs (PPxY motif) lie at residues Pro-346–Tyr-349 and Pro-391–Tyr-394. The disordered stretch occupies residues Leu-393 to Arg-414. The segment covering Ala-405–Arg-414 has biased composition (basic and acidic residues).

Belongs to the arrestin family. In terms of assembly, interacts (via PPxY motifs) with NEDD4 (via WW domains). Interacts with ADRB2. Interacts with ADRB3. Interacts with HGS (via PPxY motifs). Does not bind TXN (thioredoxin). Interacts with ITCH. Interacts with WWP1 (via WW domains). Highly expressed in skeletal muscle, placenta, kidney, lung, liver, blood, adrenal gland, lymph node, mammary gland, thyroid, and trachea. Very low levels in colon, thymus, spleen, small intestine, bladder and bone marrow. Strong expression in differentiated adipocytes compared to preadipocytes. Detected in omental fat and subcutaneous fat tissue.

The protein localises to the cytoplasm. The protein resides in the cell membrane. It is found in the lysosome. It localises to the endosome. Its subcellular location is the early endosome. Adapter protein that plays a role in regulating cell-surface expression of adrenergic receptors and probably also other G protein-coupled receptors. Plays a role in NEDD4-mediated ubiquitination and endocytosis af activated ADRB2 and subsequent ADRB2 degradation. May recruit NEDD4 to ADRB2. Alternatively, may function as adapter protein that does not play a major role in recruiting NEDD4 to ADRB2, but rather plays a role in a targeting ADRB2 to endosomes. The chain is Arrestin domain-containing protein 3 (ARRDC3) from Homo sapiens (Human).